The sequence spans 440 residues: MLSIANNCCISLAQNEWPLYKVAVVGTGRSGMAAARLLHSLGASIRIVDKTRENVSKTFMDWIKQTNCEVMFGEHCPKQFEDIDIVIPSPGVPLNLLKPHFLNTIQVLSETELAWYQLSNEKVIAITGTNGKTTIASLCAAMLVEQGISVFVGGNIGTPLSEYVLCKKKVSVVVLELSSFQLQTCSLFRPDIAICSNISINHLDYHRNMDEYISAKLNICKNQCESDLAILKPGMEALVDSYNLKARVVFYRDLGNFSTSRLLGVHNLENAEAAWLACKELGVTEEIAKKVVTTFEPLEHRLEQVRLLNGVLYVNDSKGTTVEALRAALESFKQPILLLAGGRFKGGDLTSLRPIIKKQVRIVGLFGNSREYFEDAWGDIIPITWDNTLEQAVKRLSNLAHNGEVILLAPATSSFDQYMNYIERGNDFKRIVHEVLNEHC.

Residue 128 to 134 (GTNGKTT) participates in ATP binding.

This sequence belongs to the MurCDEF family.

The protein resides in the cytoplasm. The enzyme catalyses UDP-N-acetyl-alpha-D-muramoyl-L-alanine + D-glutamate + ATP = UDP-N-acetyl-alpha-D-muramoyl-L-alanyl-D-glutamate + ADP + phosphate + H(+). Its pathway is cell wall biogenesis; peptidoglycan biosynthesis. Functionally, cell wall formation. Catalyzes the addition of glutamate to the nucleotide precursor UDP-N-acetylmuramoyl-L-alanine (UMA). The protein is UDP-N-acetylmuramoylalanine--D-glutamate ligase of Lawsonia intracellularis (strain PHE/MN1-00).